The primary structure comprises 586 residues: Chaperonin 60 subunit alpha 1, chloroplastic (586 aa).

The transit peptide at methionine 1 to alanine 46 directs the protein to the chloroplast. At serine 90 the chain carries Phosphoserine.

Belongs to the chaperonin (HSP60) family. As to quaternary structure, part of the Cpn60 complex composed of 7 alpha and 7 beta subunits. This complex shows ATPase activity. The Cpn60 complex interacts with the Cpn10 complex. In terms of tissue distribution, expressed in leaves, stems, siliques and flowers.

Its subcellular location is the plastid. The protein localises to the chloroplast. Its function is as follows. Binds RuBisCO small and large subunits and is implicated in the assembly of the enzyme oligomer. Involved in protein assisted folding. Required for proper chloroplast development. In Arabidopsis thaliana (Mouse-ear cress), this protein is Chaperonin 60 subunit alpha 1, chloroplastic (CPN60A1).